Consider the following 356-residue polypeptide: UDP-N-acetylglucosamine--N-acetylmuramyl-(pentapeptide) pyrophosphoryl-undecaprenol N-acetylglucosamine transferase (356 aa).

Residues arginine 166, serine 196, and glutamine 290 each contribute to the UDP-N-acetyl-alpha-D-glucosamine site.

It belongs to the glycosyltransferase 28 family. MurG subfamily.

The protein resides in the cell membrane. The enzyme catalyses Mur2Ac(oyl-L-Ala-gamma-D-Glu-L-Lys-D-Ala-D-Ala)-di-trans,octa-cis-undecaprenyl diphosphate + UDP-N-acetyl-alpha-D-glucosamine = beta-D-GlcNAc-(1-&gt;4)-Mur2Ac(oyl-L-Ala-gamma-D-Glu-L-Lys-D-Ala-D-Ala)-di-trans,octa-cis-undecaprenyl diphosphate + UDP + H(+). It participates in cell wall biogenesis; peptidoglycan biosynthesis. Its function is as follows. Cell wall formation. Catalyzes the transfer of a GlcNAc subunit on undecaprenyl-pyrophosphoryl-MurNAc-pentapeptide (lipid intermediate I) to form undecaprenyl-pyrophosphoryl-MurNAc-(pentapeptide)GlcNAc (lipid intermediate II). This is UDP-N-acetylglucosamine--N-acetylmuramyl-(pentapeptide) pyrophosphoryl-undecaprenol N-acetylglucosamine transferase from Staphylococcus aureus (strain MW2).